A 79-amino-acid polypeptide reads, in one-letter code: Small ribosomal subunit protein eS17 (79 aa).

It belongs to the eukaryotic ribosomal protein eS17 family.

The sequence is that of Small ribosomal subunit protein eS17 from Saccharolobus islandicus (strain Y.N.15.51 / Yellowstone #2) (Sulfolobus islandicus).